The chain runs to 291 residues: MAALQEKKSCSQRMEEFRHYCWNPDTGQMLGRTLSRWVWISLYYVAFYVVMTGLFALCIYVLMQTIDPYTPDYQDQLKSPGVTLRPDVYGEKGLEIHYNISDNRTWTSLTHTLRSFLAGYSPAAQVDNINCTSKTYFFQESFGAPNHTKFSCKFTADMLENCSGLTDPSFGFKEGKPCFIIKMNRIVRFLPSNSTPPRVDCTFLDMPHQALTPLQVEYYPPNGTFSLHYFPYYGKKAQPHYSNPLVAAKLLNVPTNTEVVVLCKILADHVTFDNPHDPYEGKVEFKLKIQK.

Topologically, residues 1–36 are cytoplasmic; sequence MAALQEKKSCSQRMEEFRHYCWNPDTGQMLGRTLSR. A helical; Signal-anchor for type II membrane protein membrane pass occupies residues 37-57; the sequence is WVWISLYYVAFYVVMTGLFAL. The Extracellular segment spans residues 58-291; that stretch reads CIYVLMQTID…KVEFKLKIQK (234 aa). Asparagine 99, asparagine 103, asparagine 130, asparagine 146, and asparagine 161 each carry an N-linked (GlcNAc...) asparagine glycan. Cysteine 131 and cysteine 152 are oxidised to a cystine. An intrachain disulfide couples cysteine 162 to cysteine 178. Residues asparagine 193 and asparagine 222 are each glycosylated (N-linked (GlcNAc...) asparagine). The interval 194–291 is immunoglobulin-like; the sequence is STPPRVDCTF…KVEFKLKIQK (98 aa). An intrachain disulfide couples cysteine 201 to cysteine 263.

The protein belongs to the X(+)/potassium ATPases subunit beta family. The ATPase pump is composed of two subunits: alpha (catalytic) and beta (regulatory). Interacts with alpha subunit ATP12A; this interaction is required for the formation of a functionally active pump and targeting at the plasma membrane. Interacts (via N-terminus) with alpha subunit ATP4A (via the P-domain). Post-translationally, N-glycosylation is necessary for assembly and functional expression of the pump at the plasma membrane.

The protein resides in the apical cell membrane. It localises to the cell membrane. The beta subunit of the gastric H(+)/K(+) ATPase pump which transports H(+) ions in exchange for K(+) ions across the apical membrane of parietal cells. Plays a structural and regulatory role in the assembly and membrane targeting of a functionally active pump. Within a transport cycle, the transfer of a H(+) ion across the membrane is coupled to ATP hydrolysis and is associated with a transient phosphorylation of the alpha subunit that shifts the pump conformation from inward-facing (E1) to outward-facing state (E2). Interacts with the phosphorylation domain of the alpha subunit and functions as a ratchet, stabilizing the lumenal-open E2 conformation and preventing the reverse reaction of the transport cycle. This is Potassium-transporting ATPase subunit beta (ATP4B) from Oryctolagus cuniculus (Rabbit).